A 1067-amino-acid polypeptide reads, in one-letter code: Kinesin-like protein KIF11-B (1067 aa).

The Kinesin motor domain maps to 18-359 (NIQVVVRCRP…LDYANRAKSI (342 aa)). Residue 105 to 112 (GQTGTGKT) participates in ATP binding. Residues 365–480 (VNQKLTKKAL…SKEQLAQESF (116 aa)) are a coiled coil. Thr-937 carries the phosphothreonine; by CDK1 modification. The residue at position 1046 (Ser-1046) is a Phosphoserine; by NEK6.

Belongs to the TRAFAC class myosin-kinesin ATPase superfamily. Kinesin family. BimC subfamily. Heterotetramer of two heavy and two light chains. Interacts with aurka. In terms of processing, phosphorylation of Thr-937 during mitosis controls the association of this protein with the spindle apparatus. Post-translationally, a subset of this protein primarily localized at the spindle pole is phosphorylated by NEK6 during mitosis. Phosphorylated on a serine residue by aurka. In unfertilized eggs, shows highest expression in the germinal vesicle and radial yolk-poor channels. Also present in testis.

It is found in the cytoplasm. The protein localises to the cytoskeleton. It localises to the spindle pole. Its function is as follows. Plus end-directed motor protein required for establishing a bipolar spindle. Associates with both interphase and spindle microtubules. May be involved in nuclear divisions taking place during the development of unfertilized eggs. Required in non-mitotic cells for transport of secretory proteins from the Golgi complex to the cell surface. This chain is Kinesin-like protein KIF11-B (kif11-b), found in Xenopus laevis (African clawed frog).